The sequence spans 382 residues: ATP phosphoribosyltransferase regulatory subunit (382 aa).

The protein belongs to the class-II aminoacyl-tRNA synthetase family. HisZ subfamily. As to quaternary structure, heteromultimer composed of HisG and HisZ subunits.

Its subcellular location is the cytoplasm. The protein operates within amino-acid biosynthesis; L-histidine biosynthesis; L-histidine from 5-phospho-alpha-D-ribose 1-diphosphate: step 1/9. In terms of biological role, required for the first step of histidine biosynthesis. May allow the feedback regulation of ATP phosphoribosyltransferase activity by histidine. The protein is ATP phosphoribosyltransferase regulatory subunit of Burkholderia pseudomallei (strain 668).